The chain runs to 287 residues: Probable endonuclease 4 (287 aa).

Residues His-69, His-109, Glu-144, Asp-178, His-181, His-215, Asp-228, His-230, and Glu-260 each coordinate Zn(2+).

Belongs to the AP endonuclease 2 family. Zn(2+) serves as cofactor.

It carries out the reaction Endonucleolytic cleavage to 5'-phosphooligonucleotide end-products.. In terms of biological role, endonuclease IV plays a role in DNA repair. It cleaves phosphodiester bonds at apurinic or apyrimidinic (AP) sites, generating a 3'-hydroxyl group and a 5'-terminal sugar phosphate. The chain is Probable endonuclease 4 from Thermotoga maritima (strain ATCC 43589 / DSM 3109 / JCM 10099 / NBRC 100826 / MSB8).